The primary structure comprises 507 residues: Ribonuclease Y (507 aa).

Residues 1–21 traverse the membrane as a helical segment; it reads MLWYIVAGAGGLLIGYLIASY. Positions 197–282 constitute a KH domain; that stretch reads TVSTVSLPSD…EMYEKAKQEV (86 aa). The region spanning 323 to 416 is the HD domain; it reads VLNHSIEVAL…VAAADALSAA (94 aa).

This sequence belongs to the RNase Y family.

It is found in the cell membrane. Endoribonuclease that initiates mRNA decay. The chain is Ribonuclease Y from Thermotoga petrophila (strain ATCC BAA-488 / DSM 13995 / JCM 10881 / RKU-1).